Consider the following 126-residue polypeptide: Large ribosomal subunit protein bL12 (126 aa).

The protein belongs to the bacterial ribosomal protein bL12 family. Homodimer. Part of the ribosomal stalk of the 50S ribosomal subunit. Forms a multimeric L10(L12)X complex, where L10 forms an elongated spine to which 2 to 4 L12 dimers bind in a sequential fashion. Binds GTP-bound translation factors.

Functionally, forms part of the ribosomal stalk which helps the ribosome interact with GTP-bound translation factors. Is thus essential for accurate translation. In Prosthecochloris aestuarii (strain DSM 271 / SK 413), this protein is Large ribosomal subunit protein bL12.